A 79-amino-acid chain; its full sequence is Conotoxin VnMKLT1-01121 (79 aa).

A signal peptide spans 1–22 (MKLTCMMIVAVLFLTAWTFVTA). Positions 23–48 (DDSRNGLEYLFPKAHYEMNPEASKLN) are excised as a propeptide. Disulfide bonds link cysteine 53/cysteine 70, cysteine 60/cysteine 74, and cysteine 69/cysteine 78.

It belongs to the conotoxin O1 superfamily. Expressed by the venom duct.

It is found in the secreted. This is Conotoxin VnMKLT1-01121 from Conus ventricosus (Mediterranean cone).